The sequence spans 47 residues: MYMLTIGLLTALGLAVGASFGKALGVAVGSYFTACIIIGIIKGALRK.

Residues 1–23 (MYMLTIGLLTALGLAVGASFGKA) form the signal peptide. A helical membrane pass occupies residues 24 to 43 (LGVAVGSYFTACIIIGIIKG).

Its subcellular location is the host membrane. This chain is Protein 0.5, found in Escherichia phage T7 (Bacteriophage T7).